Reading from the N-terminus, the 628-residue chain is tRNA uridine 5-carboxymethylaminomethyl modification enzyme MnmG (628 aa).

FAD-binding positions include 11-16, Val123, and Ser178; that span reads GAGHAG. 271-285 is a binding site for NAD(+); it reads GPRYCPSIETKIVTF. Gln368 contributes to the FAD binding site.

This sequence belongs to the MnmG family. Homodimer. Heterotetramer of two MnmE and two MnmG subunits. FAD serves as cofactor.

The protein resides in the cytoplasm. NAD-binding protein involved in the addition of a carboxymethylaminomethyl (cmnm) group at the wobble position (U34) of certain tRNAs, forming tRNA-cmnm(5)s(2)U34. This chain is tRNA uridine 5-carboxymethylaminomethyl modification enzyme MnmG, found in Bacteroides thetaiotaomicron (strain ATCC 29148 / DSM 2079 / JCM 5827 / CCUG 10774 / NCTC 10582 / VPI-5482 / E50).